We begin with the raw amino-acid sequence, 433 residues long: Keratin, type I cytoskeletal 17 (433 aa).

The tract at residues 1 to 24 (MTTTIRQFTSSSSIKGSSGLGGGS) is disordered. Positions 1–83 (MTTTIRQFTS…GGVDGLLAGG (83 aa)) are head. Ser12 and Ser13 each carry phosphoserine. A Glycyl lysine isopeptide (Lys-Gly) (interchain with G-Cter in SUMO1); alternate cross-link involves residue Lys15. Lys15 is covalently cross-linked (Glycyl lysine isopeptide (Lys-Gly) (interchain with G-Cter in SUMO2); alternate). Residues Ser25, Ser32, Ser34, and Ser39 each carry the phosphoserine modification. Phosphoserine; by RPS6KA1 is present on Ser44. The coil 1A stretch occupies residues 84-120 (EKATMQNLNDRLASYLDKVRALEEANTELEVKIRDWY). In terms of domain architecture, IF rod spans 84-395 (EKATMQNLND…RLLEGEDAHL (312 aa)). Thr110 carries the post-translational modification Phosphothreonine. The linker 1 stretch occupies residues 121 to 138 (QKQAPGPARDYSAYYQTI). Residues 139-230 (EDLKNKILVA…NHEEEMNALR (92 aa)) form a coil 1B region. The linker 12 stretch occupies residues 231 to 250 (GQVGGEINVEMDAAPGVDLS). Positions 251 to 392 (RILSEMRDQY…TYRRLLEGED (142 aa)) are coil 2. A Glycyl lysine isopeptide (Lys-Gly) (interchain with G-Cter in SUMO2) cross-link involves residue Lys278. Thr279 is subject to Phosphothreonine. Phosphoserine is present on Ser323. Positions 393–433 (AHLTQYKPKEPVTTRQVRTIVEEVQDGKVISSREQVHQTTR) are tail. Glycyl lysine isopeptide (Lys-Gly) (interchain with G-Cter in SUMO1); alternate cross-links involve residues Lys399, Lys401, and Lys420. Residues Lys399, Lys401, and Lys420 each participate in a glycyl lysine isopeptide (Lys-Gly) (interchain with G-Cter in SUMO2); alternate cross-link.

The protein belongs to the intermediate filament family. In terms of assembly, heterodimer of a type I and a type II keratin. KRT17 associates with KRT6 isomers (KRT6A or KRT6B). Interacts with TRADD and SFN. Phosphorylation at Ser-44 occurs in a growth- and stress-dependent fashion in skin keratinocytes, it has no effect on filament organization.

The protein resides in the cytoplasm. In terms of biological role, type I keratin involved in the formation and maintenance of various skin appendages, specifically in determining shape and orientation of hair. Required for the correct growth of hair follicles, in particular for the persistence of the anagen (growth) state. Modulates the function of TNF-alpha in the specific context of hair cycling. Regulates protein synthesis and epithelial cell growth through binding to the adapter protein SFN and by stimulating Akt/mTOR pathway. Involved in tissue repair. May be a marker of basal cell differentiation in complex epithelia and therefore indicative of a certain type of epithelial 'stem cells'. Acts as a promoter of epithelial proliferation by acting a regulator of immune response in skin: promotes Th1/Th17-dominated immune environment contributing to the development of basaloid skin tumors. May act as an autoantigen in the immunopathogenesis of psoriasis, with certain peptide regions being a major target for autoreactive T-cells and hence causing their proliferation. This Rattus norvegicus (Rat) protein is Keratin, type I cytoskeletal 17.